Reading from the N-terminus, the 695-residue chain is DUF724 domain-containing protein 3 (695 aa).

The disordered stretch occupies residues 376-464 (ITVTPLKQQD…GTSDTIRVDD (89 aa)). Residues 384-402 (QDAETEGKKSPKKTPEPVK) are compositionally biased toward basic and acidic residues. Residues 434 to 459 (NQNSNLNETDETCNVSKAGVNGTSDT) show a composition bias toward polar residues. Positions 509 to 694 (PFTKNLPFWK…LEFITSVLAP (186 aa)) constitute a DUF724 domain. Residues 614 to 684 (VEERKCLEKR…TIDQEIANVE (71 aa)) are a coiled coil.

In terms of assembly, homodimer.

In terms of biological role, may be involved in the polar growth of plant cells via transportation of RNAs. The chain is DUF724 domain-containing protein 3 from Arabidopsis thaliana (Mouse-ear cress).